Here is a 500-residue protein sequence, read N- to C-terminus: NAD(P)H-quinone oxidoreductase chain 4, chloroplastic (500 aa).

A run of 14 helical transmembrane segments spans residues 4–24, 37–57, 84–104, 111–129, 134–154, 167–187, 208–228, 242–262, 272–292, 305–325, 330–350, 374–396, 411–431, and 462–482; these read FPWLTIIVVLPIFAGSSIFFL, ICICLLELLLTTYTFCYHFQL, GLSIGPILLTGFITTLATLAA, SRLFHFLMLAMYSGQIGSF, LLLFFIMWELELIPVYLLLSM, FILYTAGGSIFLLMGIPGMGL, ALEILFYFGFLIAYAVKSPII, HYSTCMLLAGILLKMGAYGLV, AHSIFSPWLMIVGTIQVIYAA, IAYSSVSHMAFIIIGIGSITD, GAILQIISHGFIGAALFFLAG, IFTMFSSFSMASLALPGMSGFVA, FFMPKILITFVMAIGMILTPI, and LFVSICIFLPVIGIGIYPDFV.

This sequence belongs to the complex I subunit 4 family.

The protein resides in the plastid. It localises to the chloroplast thylakoid membrane. It carries out the reaction a plastoquinone + NADH + (n+1) H(+)(in) = a plastoquinol + NAD(+) + n H(+)(out). The catalysed reaction is a plastoquinone + NADPH + (n+1) H(+)(in) = a plastoquinol + NADP(+) + n H(+)(out). This is NAD(P)H-quinone oxidoreductase chain 4, chloroplastic from Chloranthus spicatus (Chulantree).